Consider the following 334-residue polypeptide: Fe-S cluster assembly protein DRE2 (334 aa).

Positions 1–131 (MASTKTGLVL…ASIKAEPVAV (131 aa)) are N-terminal SAM-like domain. Positions 132–228 (PLRNHKKTTT…EDELVDENEM (97 aa)) are linker. Residues 135–229 (NHKKTTTPGT…DELVDENEMR (95 aa)) form a disordered region. Positions 140-150 (TTPGTTTTAKK) are enriched in low complexity. Acidic residues-rich tracts occupy residues 182–192 (DSEDEDEESEG) and 215–227 (DSIE…DENE). The [2Fe-2S] cluster site is built by C238, C249, C252, and C254. The interval 238–254 (CGKSKTRRRKACKDCTC) is fe-S binding site A. [4Fe-4S] cluster is bound by residues C297, C300, C308, and C311. 2 short sequence motifs (cx2C motif) span residues 297–300 (CGSC) and 308–311 (CSGC). The tract at residues 297-311 (CGSCTLGDAFRCSGC) is fe-S binding site B.

It belongs to the anamorsin family. As to quaternary structure, monomer. Interacts with TAH18. Interacts with MIA40. [2Fe-2S] cluster serves as cofactor. The cofactor is [4Fe-4S] cluster.

It is found in the cytoplasm. The protein resides in the mitochondrion intermembrane space. Component of the cytosolic iron-sulfur (Fe-S) protein assembly (CIA) machinery required for the maturation of extramitochondrial Fe-S proteins. Part of an electron transfer chain functioning in an early step of cytosolic Fe-S biogenesis, facilitating the de novo assembly of a [4Fe-4S] cluster on the scaffold complex CFD1-NBP35. Electrons are transferred to DRE2 from NADPH via the FAD- and FMN-containing protein TAH18. TAH18-DRE2 are also required for the assembly of the diferric tyrosyl radical cofactor of ribonucleotide reductase (RNR), probably by providing electrons for reduction during radical cofactor maturation in the catalytic small subunit RNR2. This is Fe-S cluster assembly protein DRE2 from Zygosaccharomyces rouxii (strain ATCC 2623 / CBS 732 / NBRC 1130 / NCYC 568 / NRRL Y-229).